We begin with the raw amino-acid sequence, 1457 residues long: ABC transporter G family member 36 (1457 aa).

The disordered stretch occupies residues 14–43 (RLGGSMRGDSGSMWRRGDDVFSRSSREEDD). Residues 28 to 39 (RRGDDVFSRSSR) show a composition bias toward basic and acidic residues. In terms of domain architecture, ABC transporter 1 spans 164–437 (GNALGILPNR…FESTGFKCPD (274 aa)). 197–204 (GPPGSGKT) is a binding site for ATP. Residues 515 to 728 (ELLKANIDRE…AQNAISVNEL (214 aa)) form the ABC transmembrane type-2 1 domain. 7 consecutive transmembrane segments (helical) span residues 533–553 (FVYM…MTLF), 565–585 (SGGI…FNGF), 621–641 (IPIT…VIGF), 653–673 (LLML…GGAA), 677–697 (IVAN…GGFI), 706–726 (WWIW…ISVN), and 765–785 (IGFG…TLAL). Positions 821-841 (SSGSTRRPMGNGTENDSTIVD) are disordered. The ABC transporter 2 domain maps to 860 to 1112 (LSFDNVRYSV…ELIKYFESIP (253 aa)). 905 to 912 (GVSGAGKT) serves as a coordination point for ATP. One can recognise an ABC transmembrane type-2 2 domain in the interval 1185–1399 (TQCMACLWKQ…TLYGLVVSQF (215 aa)). 7 helical membrane passes run 1209–1229 (FFFT…LGGK), 1244–1264 (YAAV…VVAV), 1292–1312 (IPYT…MIGF), 1319–1339 (FFWY…YGMM), 1349–1369 (IASI…GFVI), 1380–1400 (WYCW…SQFG), and 1429–1449 (WVAT…GFAI).

It belongs to the ABC transporter superfamily. ABCG family. PDR (TC 3.A.1.205) subfamily.

It localises to the membrane. May be a general defense protein. This is ABC transporter G family member 36 from Oryza sativa subsp. indica (Rice).